We begin with the raw amino-acid sequence, 358 residues long: Uroporphyrinogen decarboxylase (358 aa).

Substrate-binding positions include 29-33 (RQAGR), Asp-79, Tyr-155, Ser-210, and His-330.

The protein belongs to the uroporphyrinogen decarboxylase family. Homodimer.

Its subcellular location is the cytoplasm. The catalysed reaction is uroporphyrinogen III + 4 H(+) = coproporphyrinogen III + 4 CO2. It participates in porphyrin-containing compound metabolism; protoporphyrin-IX biosynthesis; coproporphyrinogen-III from 5-aminolevulinate: step 4/4. Catalyzes the decarboxylation of four acetate groups of uroporphyrinogen-III to yield coproporphyrinogen-III. The chain is Uroporphyrinogen decarboxylase from Bordetella petrii (strain ATCC BAA-461 / DSM 12804 / CCUG 43448).